The chain runs to 612 residues: Dihydroxy-acid dehydratase (612 aa).

Mg(2+) is bound at residue D81. C122 serves as a coordination point for [2Fe-2S] cluster. Residues D123 and K124 each coordinate Mg(2+). Residue K124 is modified to N6-carboxylysine. Residue C193 coordinates [2Fe-2S] cluster. Position 489 (E489) interacts with Mg(2+). The active-site Proton acceptor is S515.

Belongs to the IlvD/Edd family. Homodimer. [2Fe-2S] cluster is required as a cofactor. It depends on Mg(2+) as a cofactor.

It carries out the reaction (2R)-2,3-dihydroxy-3-methylbutanoate = 3-methyl-2-oxobutanoate + H2O. The catalysed reaction is (2R,3R)-2,3-dihydroxy-3-methylpentanoate = (S)-3-methyl-2-oxopentanoate + H2O. It participates in amino-acid biosynthesis; L-isoleucine biosynthesis; L-isoleucine from 2-oxobutanoate: step 3/4. Its pathway is amino-acid biosynthesis; L-valine biosynthesis; L-valine from pyruvate: step 3/4. In terms of biological role, functions in the biosynthesis of branched-chain amino acids. Catalyzes the dehydration of (2R,3R)-2,3-dihydroxy-3-methylpentanoate (2,3-dihydroxy-3-methylvalerate) into 2-oxo-3-methylpentanoate (2-oxo-3-methylvalerate) and of (2R)-2,3-dihydroxy-3-methylbutanoate (2,3-dihydroxyisovalerate) into 2-oxo-3-methylbutanoate (2-oxoisovalerate), the penultimate precursor to L-isoleucine and L-valine, respectively. The chain is Dihydroxy-acid dehydratase from Xanthomonas oryzae pv. oryzae (strain MAFF 311018).